A 374-amino-acid polypeptide reads, in one-letter code: Fibrous sheath-interacting protein 1 (374 aa).

Disordered stretches follow at residues Met1 to Leu80, Glu95 to Arg120, and Glu225 to Ser244. 3 stretches are compositionally biased toward basic and acidic residues: residues Pro12–Ser28, Asp45–Ser55, and Glu65–Leu77. A coiled-coil region spans residues Ser262–Leu290.

The protein belongs to the FSIP1 family.

This is Fibrous sheath-interacting protein 1 (fsip1) from Danio rerio (Zebrafish).